The following is a 392-amino-acid chain: Early estrogen-induced gene 1 protein (392 aa).

Residues 2 to 145 form the C2 NT-type domain; the sequence is AFLMKKKKFK…ILKVTIGMFL (144 aa). A required for interaction with TNFRSF11A/RANK region spans residues 129–138; the sequence is NTRQDNSILK. The segment at 173–324 is disordered; the sequence is LTCKGGGTSS…RKKDSVESHP (152 aa). A compositionally biased stretch (low complexity) spans 183-194; that stretch reads GGSSSTNSLTGS. Residues 228 to 255 are compositionally biased toward polar residues; that stretch reads SRNSSYASQQSKLSGYSTEHSRSSSLSD. Residues 262 to 273 show a composition bias toward low complexity; that stretch reads TSTSSSASGGLS. 2 stretches are compositionally biased toward basic and acidic residues: residues 281-300 and 307-324; these read GMER…EKPP and HLSD…ESHP.

It belongs to the EEIG family. Part of a complex composed of EEIG1, TNFRSF11A/RANK, PLCG2, GAB2, TEC and BTK; complex formation increases in the presence of TNFSF11/RANKL. Interacts with PRDM1/BLIMP1; following TNFSF11/RANKL stimulation in bone marrow-derived macrophages, the interaction promotes the binding of PRDM1/BLIMP1 to the gene promoter of IRF8. Interacts (via N-terminus) with TNFRSF11A/RANK (via cytoplasmic domain); when in the presence of TNFSF11/RANKL. As to expression, expressed during TNFSF11/RANKL-induced differentiation of bone marrow-derived macrophages to osteoclasts.

It is found in the nucleus. The protein localises to the cytoplasm. It localises to the membrane raft. Functionally, key component of TNFSF11/RANKL- and TNF-induced osteoclastogenesis pathways, thereby mediates bone resorption in pathological bone loss conditions. Required for TNFSF11/RANKL-induced osteoclastogenesis via its interaction with TNFRSF11A/RANK, thereby facilitates the downsteam transcription of NFATC1 and activation of PLCG2. Facilitates recruitment of the transcriptional repressor PRDM1/BLIMP1 to the promoter of the anti-osteoclastogenesis gene IRF8, thereby resulting in transcription of osteoclast differentiation factors. May play a role in estrogen action. The polypeptide is Early estrogen-induced gene 1 protein (Eeig1) (Mus musculus (Mouse)).